The following is a 93-amino-acid chain: uncharacterized protein (93 aa).

One can recognise a Sm domain in the interval 1–76 (MDSHTTEKRR…IQTIEPDESM (76 aa)).

Part of the core SMN complex at least composed of smn1, yip11/gem2, gem6, gem7 and gem8. Interacts with gem7; the interaction is direct.

In terms of biological role, the SMN complex catalyzes the assembly of small nuclear ribonucleoproteins (snRNPs), the building blocks of the spliceosome, and thereby plays an important role in the splicing of cellular pre-mRNAs. Most spliceosomal snRNPs contain a common set of Sm proteins smb1, smd1, smd2, smd3, sme1, smf1 and smg1 that assemble in a heptameric protein ring on the Sm site of the small nuclear RNA to form the core snRNP (Sm core). In the cytosol, the Sm proteins smd1, smd2, sme1, smf1 and smg1 (5Sm) are trapped in an inactive 6S pICln-Sm complex by the chaperone saf5. To complete assembly of core snRNPs, the SMN complex accepts 5Sm from saf5. Binding of snRNA inside 5Sm triggers eviction of the SMN complex, thereby allowing binding of smd3 and smb1 to complete assembly of the core snRNP. This is an uncharacterized protein from Schizosaccharomyces pombe (strain 972 / ATCC 24843) (Fission yeast).